We begin with the raw amino-acid sequence, 1863 residues long: Calcineurin-binding protein 1 (1863 aa).

TPR repeat units follow at residues 30–65 (LSQT…ITNS), 81–116 (FLAL…DAKD), and 118–150 (VLWN…SPNN). The interval 315-361 (ERESGGSVKEKEPVFSEEHPQERRSTRLERLRNQKPEKEGLEFDNSK) is disordered. TPR repeat units lie at residues 543–576 (ARYF…LGRE), 602–637 (IHEI…LAPL), 866–900 (INSP…EKNE), 955–988 (QCFF…DYQT), 990–1009 (EQCV…SSRT), 1011–1031 (LVKL…PPDD), 1143–1183 (FESW…SQRV), 1226–1263 (VPFY…RQDW), 1264–1297 (SHAF…NPSA), 1306–1339 (ASRL…KDTA), 1377–1412 (EGVW…LAQG), and 1508–1541 (NSLR…SMSR). Over residues 894–923 (VHVEKNENNKTESKKDGSEEQVGYREKEQS) the composition is skewed to basic and acidic residues. Residues 894 to 941 (VHVEKNENNKTESKKDGSEEQVGYREKEQSEQQSKQIPEHTEEVAEEE) form a disordered region. The disordered stretch occupies residues 1813 to 1840 (KMKRGASTSSVVPSVQSGGTSEPEPAPK). Positions 1818–1832 (ASTSSVVPSVQSGGT) are enriched in polar residues.

In terms of assembly, component of the HIRA complex made of UBN1, UBN2, ASF1A, CABIN1 and HIRA. In terms of tissue distribution, expressed at low levels in seedlings.

The protein localises to the nucleus. Its function is as follows. May be required for replication-independent chromatin assembly. The sequence is that of Calcineurin-binding protein 1 from Arabidopsis thaliana (Mouse-ear cress).